We begin with the raw amino-acid sequence, 491 residues long: Glutamate--tRNA ligase (491 aa).

The 'HIGH' region motif lies at 9 to 19; it reads PSPTGTPHVGL. A 'KMSKS' region motif is present at residues 253-257; it reads KLSKR. Lys-256 lines the ATP pocket.

Belongs to the class-I aminoacyl-tRNA synthetase family. Glutamate--tRNA ligase type 1 subfamily. In terms of assembly, monomer.

Its subcellular location is the cytoplasm. The catalysed reaction is tRNA(Glu) + L-glutamate + ATP = L-glutamyl-tRNA(Glu) + AMP + diphosphate. Its function is as follows. Catalyzes the attachment of glutamate to tRNA(Glu) in a two-step reaction: glutamate is first activated by ATP to form Glu-AMP and then transferred to the acceptor end of tRNA(Glu). The chain is Glutamate--tRNA ligase from Mycolicibacterium gilvum (strain PYR-GCK) (Mycobacterium gilvum (strain PYR-GCK)).